We begin with the raw amino-acid sequence, 262 residues long: Cyclin-dependent kinase inhibitor 1 (262 aa).

The tract at residues 140–212 is disordered; sequence SDVAEAGSEH…SAQQATRPKI (73 aa). Positions 160-169 are enriched in basic and acidic residues; the sequence is SGRDRERRET. A compositionally biased stretch (low complexity) spans 198–208; that stretch reads SAATASAQQAT.

This sequence belongs to the CDI family. ICK/KRP subfamily.

The polypeptide is Cyclin-dependent kinase inhibitor 1 (KRP1) (Oryza sativa subsp. indica (Rice)).